The primary structure comprises 221 residues: Alpha-ketoglutarate-dependent dioxygenase alkB homolog 7, mitochondrial (221 aa).

The N-terminal 23 residues, 1–23 (MAGGGQVVLRTLSQQGWVRGSGA), are a transit peptide targeting the mitochondrion. Fe cation is bound by residues histidine 121 and aspartate 123. Tyrosine 165 lines the 2-oxoglutarate pocket. Histidine 177 contributes to the Fe cation binding site. 2-oxoglutarate is bound by residues 197–199 (RIS) and arginine 203.

The protein belongs to the alkB family. It depends on Fe(2+) as a cofactor.

It localises to the mitochondrion matrix. In terms of biological role, may function as protein hydroxylase; can catalyze auto-hydroxylation at Leu-110 (in vitro), but this activity may be due to the absence of the true substrate. Required to induce programmed necrosis in response to DNA damage caused by cytotoxic alkylating agents. Acts by triggering the collapse of mitochondrial membrane potential and loss of mitochondrial function that leads to energy depletion and cell death. ALKBH7-mediated necrosis is probably required to prevent the accumulation of cells with DNA damage. Does not display DNA demethylase activity. Involved in fatty acid metabolism. The chain is Alpha-ketoglutarate-dependent dioxygenase alkB homolog 7, mitochondrial (ALKBH7) from Bos taurus (Bovine).